Reading from the N-terminus, the 852-residue chain is DNA polymerase kappa (852 aa).

A UmuC domain is found at 102-357; sequence IVHVDMDAFY…LPIRKVSGIG (256 aa). The Mg(2+) site is built by Asp106 and Asp197. The tract at residues 252–273 is disordered; the sequence is FEDSPPDLQPQGSPFQLNSEEQ. Positions 261–273 are enriched in polar residues; it reads PQGSPFQLNSEEQ. 2 UBZ4-type zinc fingers span residues 619–649 and 761–791; these read TFICPVCFREQEGVSLEAFNEHVDECLDGPS and ALVCPVCNLEQETSDLTLFNIHVDICLNKGI. The Zn(2+) site is built by Cys622, Cys625, His640, Cys644, Cys764, Cys767, His782, and Cys786. Residues 798–852 are disordered; it reads SEGNSVKQPKESSRSTDRLQKASGRTKRPGTKTKSSTLKKTKPRDPRHTLDGFFK. Residues 805–817 show a composition bias toward basic and acidic residues; sequence QPKESSRSTDRLQ. Positions 821 to 839 are enriched in basic residues; that stretch reads GRTKRPGTKTKSSTLKKTK. Residues 840 to 852 show a composition bias toward basic and acidic residues; that stretch reads PRDPRHTLDGFFK.

Belongs to the DNA polymerase type-Y family. In terms of assembly, interacts with PCNA. Interacts with REV1. It depends on Mg(2+) as a cofactor. Mn(2+) is required as a cofactor. As to expression, detected at low levels in heart, brain, lung, liver, kidney and testis.

The protein resides in the nucleus. It catalyses the reaction DNA(n) + a 2'-deoxyribonucleoside 5'-triphosphate = DNA(n+1) + diphosphate. Functionally, DNA polymerase specifically involved in DNA repair. Plays an important role in translesion synthesis, where the normal high-fidelity DNA polymerases cannot proceed and DNA synthesis stalls. Depending on the context, it inserts the correct base, but causes frequent base transitions, transversions and frameshifts. Lacks 3'-5' proofreading exonuclease activity. Forms a Schiff base with 5'-deoxyribose phosphate at abasic sites, but does not have lyase activity. In Mus musculus (Mouse), this protein is DNA polymerase kappa (Polk).